We begin with the raw amino-acid sequence, 635 residues long: Threonine--tRNA ligase (635 aa).

In terms of domain architecture, TGS spans 1–61; that stretch reads MVSIRLPDGS…DRDASLAIVT (61 aa). The tract at residues 242-533 is catalytic; sequence DHRKLGKQLD…LIEHHAGAMP (292 aa). Zn(2+)-binding residues include Cys-333, His-384, and His-510.

Belongs to the class-II aminoacyl-tRNA synthetase family. In terms of assembly, homodimer. The cofactor is Zn(2+).

It localises to the cytoplasm. It carries out the reaction tRNA(Thr) + L-threonine + ATP = L-threonyl-tRNA(Thr) + AMP + diphosphate + H(+). Its function is as follows. Catalyzes the attachment of threonine to tRNA(Thr) in a two-step reaction: L-threonine is first activated by ATP to form Thr-AMP and then transferred to the acceptor end of tRNA(Thr). Also edits incorrectly charged L-seryl-tRNA(Thr). This Burkholderia lata (strain ATCC 17760 / DSM 23089 / LMG 22485 / NCIMB 9086 / R18194 / 383) protein is Threonine--tRNA ligase.